The chain runs to 231 residues: NADH-ubiquinone oxidoreductase chain 4 (231 aa).

A run of 6 helical transmembrane segments spans residues 1–21 (PIAG…YGII), 34–54 (MFLP…LTCL), 63–85 (IAYS…TPWG), 89–111 (AMAL…NTTY), 128–148 (ILPM…AVPP), and 156–176 (LLIM…LGLS).

The protein belongs to the complex I subunit 4 family.

The protein resides in the mitochondrion membrane. It carries out the reaction a ubiquinone + NADH + 5 H(+)(in) = a ubiquinol + NAD(+) + 4 H(+)(out). Functionally, core subunit of the mitochondrial membrane respiratory chain NADH dehydrogenase (Complex I) that is believed to belong to the minimal assembly required for catalysis. Complex I functions in the transfer of electrons from NADH to the respiratory chain. The immediate electron acceptor for the enzyme is believed to be ubiquinone. The chain is NADH-ubiquinone oxidoreductase chain 4 (MT-ND4) from Agkistrodon contortrix contortrix (Southern copperhead).